Consider the following 332-residue polypeptide: MKKITTSAYMPTEIEVVNVSENVAKIIAYPFETGYAVTLAHPLRRLLYTSTVGFAPTAVKIDGVAHEFDSMRGMLEDVTLFIINLKNLRFKLKNDSKREVIEYSFKGPKEITGIDLNNDIVEIVNPDSYLATINEDAELKFSLIVEKGIGYVPSEEIRDYIDSEYIALDAFFTPVKKAVYEIENVLVEDNPDYEKIVLTVTTDGQVSPIEAFKHSIEAMYKQMSIFNNVLNIDVNMALTSSQNSNEHSKLLESVENLNLSARSFNCLDKADIRYIGELALMEESELKDLKNLGKKSLDEIKAVMAEIGYPFGENTLGDSKEALRKKISELKS.

An alpha N-terminal domain (alpha-NTD) region spans residues 1–230 (MKKITTSAYM…KQMSIFNNVL (230 aa)). Positions 246-332 (EHSKLLESVE…LRKKISELKS (87 aa)) are alpha C-terminal domain (alpha-CTD).

This sequence belongs to the RNA polymerase alpha chain family. In terms of assembly, homodimer. The RNAP catalytic core consists of 2 alpha, 1 beta, 1 beta' and 1 omega subunit. When a sigma factor is associated with the core the holoenzyme is formed, which can initiate transcription.

It catalyses the reaction RNA(n) + a ribonucleoside 5'-triphosphate = RNA(n+1) + diphosphate. Functionally, DNA-dependent RNA polymerase catalyzes the transcription of DNA into RNA using the four ribonucleoside triphosphates as substrates. This Campylobacter fetus subsp. fetus (strain 82-40) protein is DNA-directed RNA polymerase subunit alpha.